Here is a 348-residue protein sequence, read N- to C-terminus: VIP36-like protein (348 aa).

A signal peptide spans 1–44 (MAATLGPLGSWQQWRRCLSARDGSRMLLLLLLLGSGQGPQQVGA). Residues 45 to 313 (GQTFEYLKRE…APLPPLSGLA (269 aa)) lie on the Lumenal side of the membrane. The L-type lectin-like domain occupies 49 to 274 (EYLKREHSLS…DVISLKLFEL (226 aa)). A carbohydrate-binding residues include Ser93 and Asp128. Asp159, Tyr161, and Asn163 together coordinate Ca(2+). 161 to 163 (YPN) is an a carbohydrate binding site. Asn181 carries N-linked (GlcNAc...) (high mannose) asparagine glycosylation. His188 provides a ligand contact to a carbohydrate. Asp191 is a binding site for Ca(2+). A disulfide bridge links Cys200 with Cys237. 258–260 (GDL) contributes to the a carbohydrate binding site. The helical transmembrane segment at 314 to 336 (LFLIVFFSLVFSVFAIVIGIILY) threads the bilayer. The Cytoplasmic segment spans residues 337–348 (NKWQEQSRKRFY). An Endoplasmic reticulum retention signal motif is present at residues 344–346 (RKR).

Expressed in numerous tissues. Highest expression in skeletal muscle and kidney, intermediate levels in heart, liver and placenta, low levels in brain, thymus, spleen, small intestine and lung.

It is found in the endoplasmic reticulum membrane. Its subcellular location is the golgi apparatus membrane. Functionally, may be involved in the regulation of export from the endoplasmic reticulum of a subset of glycoproteins. May function as a regulator of ERGIC-53. This is VIP36-like protein (LMAN2L) from Homo sapiens (Human).